The primary structure comprises 233 residues: Small ribosomal subunit protein uS2 (233 aa).

Belongs to the universal ribosomal protein uS2 family.

The sequence is that of Small ribosomal subunit protein uS2 from Clostridium botulinum (strain Eklund 17B / Type B).